The chain runs to 636 residues: Phosphomethylpyrimidine synthase (636 aa).

Residues 48–70 are disordered; it reads DDTPTDFGGEKNPPVRVYDTSGP. Residues Asn-231, Met-260, Tyr-289, His-325, 345–347, 386–389, and Glu-425 each bind substrate; these read SRG and DGLR. His-429 provides a ligand contact to Zn(2+). Tyr-452 is a binding site for substrate. His-493 contacts Zn(2+). [4Fe-4S] cluster-binding residues include Cys-573, Cys-576, and Cys-581.

It belongs to the ThiC family. As to quaternary structure, homodimer. The cofactor is [4Fe-4S] cluster.

It catalyses the reaction 5-amino-1-(5-phospho-beta-D-ribosyl)imidazole + S-adenosyl-L-methionine = 4-amino-2-methyl-5-(phosphooxymethyl)pyrimidine + CO + 5'-deoxyadenosine + formate + L-methionine + 3 H(+). Its pathway is cofactor biosynthesis; thiamine diphosphate biosynthesis. Functionally, catalyzes the synthesis of the hydroxymethylpyrimidine phosphate (HMP-P) moiety of thiamine from aminoimidazole ribotide (AIR) in a radical S-adenosyl-L-methionine (SAM)-dependent reaction. This is Phosphomethylpyrimidine synthase from Cellvibrio japonicus (strain Ueda107) (Pseudomonas fluorescens subsp. cellulosa).